The following is a 298-amino-acid chain: Heat stress transcription factor C-2a (298 aa).

The disordered stretch occupies residues 105-128 (SSGGGGAKRKEEAGGCGGGGEAAA). The hydrophobic repeat HR-A/B stretch occupies residues 145 to 181 (LRREQREIEGRVAAMWRRVQETERRPKQMLAFLVKVV). The short motif at 213–216 (KRPR) is the Nuclear localization signal element.

It belongs to the HSF family. Class C subfamily. As to quaternary structure, homotrimer. In terms of processing, exhibits temperature-dependent phosphorylation.

It is found in the nucleus. In terms of biological role, transcriptional regulator that specifically binds DNA of heat shock promoter elements (HSE). This chain is Heat stress transcription factor C-2a (HSFC2A), found in Oryza sativa subsp. japonica (Rice).